Consider the following 282-residue polypeptide: tRNA uridine(34) hydroxylase (282 aa).

Positions Glu-128–Tyr-222 constitute a Rhodanese domain. The active-site Cysteine persulfide intermediate is Cys-182.

Belongs to the TrhO family.

It carries out the reaction uridine(34) in tRNA + AH2 + O2 = 5-hydroxyuridine(34) in tRNA + A + H2O. Functionally, catalyzes oxygen-dependent 5-hydroxyuridine (ho5U) modification at position 34 in tRNAs. The chain is tRNA uridine(34) hydroxylase from Cupriavidus pinatubonensis (strain JMP 134 / LMG 1197) (Cupriavidus necator (strain JMP 134)).